Consider the following 694-residue polypeptide: Putative bifunctional polynucleotide kinase/RNA ligase (694 aa).

A ligase domain region spans residues 1–385 (MLHVSRLLAN…TKQALNNKLA (385 aa)). The segment at 394 to 694 (KQLLVLIGIS…FNVCRDYLEF (301 aa)) is bifunctional 5'-OH polynucleotide kinase/polynucleotide 3'-phosphatase. 401–408 (GISGSGKS) contacts ATP.

The enzyme catalyses a 5'-end dephospho-2'-deoxyribonucleoside-DNA + ATP = a 5'-end 5'-phospho-2'-deoxyribonucleoside-DNA + ADP + H(+). It catalyses the reaction ATP + (ribonucleotide)n-3'-hydroxyl + 5'-phospho-(ribonucleotide)m = (ribonucleotide)n+m + AMP + diphosphate.. Functionally, trifunctional enzyme that possesses a bifunctional polynucleotide kinase/phosphatase activity and an ATP-dependent RNA ligase activity. May therefore play a role to evade an RNA damage-based host response. This is Putative bifunctional polynucleotide kinase/RNA ligase (PNK/PNL) from Autographa californica nuclear polyhedrosis virus (AcMNPV).